Here is a 298-residue protein sequence, read N- to C-terminus: MDSKRLRIAMQKSGRLSQDSQELLKSCGFKINLREDRLIAHVENMPIDILRVRDDDIPGLVMDKVVDLGIVGENVLEETMLERQSQGLPTSYKKLKDLDYGGCRLSLAIPREEEWTGVAALQGKKIATTYPHLLKRFLAEQGVTFKPVLLTGSVEVAPRAGLAEAICDLVSSGATLEANGLKEVQVIYRSKASLIQADTELYPEKQKLVDRLMPRLEGMLQARESKYIMMHAPKDKLAEITALLPGAENPTVMPLASDSTHVAMHVVATETLFWETMEKLKALGASSILVLPIEKMMM.

This sequence belongs to the ATP phosphoribosyltransferase family. Long subfamily. Mg(2+) serves as cofactor.

It is found in the cytoplasm. It catalyses the reaction 1-(5-phospho-beta-D-ribosyl)-ATP + diphosphate = 5-phospho-alpha-D-ribose 1-diphosphate + ATP. It functions in the pathway amino-acid biosynthesis; L-histidine biosynthesis; L-histidine from 5-phospho-alpha-D-ribose 1-diphosphate: step 1/9. Feedback inhibited by histidine. Catalyzes the condensation of ATP and 5-phosphoribose 1-diphosphate to form N'-(5'-phosphoribosyl)-ATP (PR-ATP). Has a crucial role in the pathway because the rate of histidine biosynthesis seems to be controlled primarily by regulation of HisG enzymatic activity. The sequence is that of ATP phosphoribosyltransferase from Tolumonas auensis (strain DSM 9187 / NBRC 110442 / TA 4).